The chain runs to 829 residues: MNLYESMNPTAQRIHELTDLLNRYAYEYYTLDAPSIPDAEYDRLFRELEALERNHPELKLPDSPTQRVGGEPLAGFAEVRHEVPMLSLTNAFSPQDENGVFDHAEMYAFDQRVRDGLDGGNPEYVIEPKFDGLAISLLYRDGVLVQAATRGDGTTGEDVTRNVKTVSNIPLRLHGENVPELIEVRGEVLMLKADFAALNQRQTENGQKPFANPRNAAAGSLRQLDSRITAQRKLHFFPYSVARQQGGLIAEEHIQELAYFQALGFSLPNGNFGCFKNIGEVLAFYEHMQQKRPELPYEIDGTVVKVNSLAQQHELGFISRAPRWAVAHKFPAEEALTIVEAIDVQIGRTGAVTPVARLQPVFVGGVTVTNATLHNQDEVSRKDVRVGDTVVVRRAGDVIPEVVRVIFERRPMQETAVAVSDGIGHQQDDLFAETPSAKQTESVPLHKPYRLPARCPICRSEIEREEGEAVARCSGGMLCQAQRAQGLIHFASRKAMDIDGLGEKQIEQLVAQDLVRHFADLYRIDIPTLQKMKETADKGSSENENGDAETVSGDLSKYNTQNGKKQPTKWAQNILAGIESGKTPELARFLFALGIRHVGERTAKTLAQAFGTLERVRRAPEPVLACLPDIGTVVARSIAHFFAQAEQQAMIDELLAAGVAPQAQAVSLPAAQYAGPQRWITRLPGFKISENKAQALWELAGQSIEGLQNDKALPADWQAWRSKAQNTALLENLKTFFAQMPSEDEAAQGSDGINKAVAGKTFVLTGTLPTFKRDQAQALIEAAGGKVSGSVSKKTDYVVAGETAGSKLEKANALGVSVLSEAELLTLLC.

NAD(+) is bound by residues 38–42 (DAEYD), 87–88 (SL), and E127. The N6-AMP-lysine intermediate role is filled by K129. NAD(+) is bound by residues R150, E187, K305, and K329. C455, C458, C473, and C479 together coordinate Zn(2+). Positions 534-564 (ETADKGSSENENGDAETVSGDLSKYNTQNGK) are disordered. In terms of domain architecture, BRCT spans 752–829 (GINKAVAGKT…SEAELLTLLC (78 aa)).

Belongs to the NAD-dependent DNA ligase family. LigA subfamily. Mg(2+) is required as a cofactor. Mn(2+) serves as cofactor.

It carries out the reaction NAD(+) + (deoxyribonucleotide)n-3'-hydroxyl + 5'-phospho-(deoxyribonucleotide)m = (deoxyribonucleotide)n+m + AMP + beta-nicotinamide D-nucleotide.. In terms of biological role, DNA ligase that catalyzes the formation of phosphodiester linkages between 5'-phosphoryl and 3'-hydroxyl groups in double-stranded DNA using NAD as a coenzyme and as the energy source for the reaction. It is essential for DNA replication and repair of damaged DNA. In Neisseria gonorrhoeae (strain ATCC 700825 / FA 1090), this protein is DNA ligase.